Reading from the N-terminus, the 250-residue chain is 2,3-bisphosphoglycerate-dependent phosphoglycerate mutase (250 aa).

Substrate contacts are provided by residues 10 to 17, 23 to 24, Arg62, 89 to 92, Lys100, 116 to 117, and 185 to 186; these read RHGESQWN, TG, ERHY, RR, and GN. The active-site Tele-phosphohistidine intermediate is His11. Residue Glu89 is the Proton donor/acceptor of the active site.

It belongs to the phosphoglycerate mutase family. BPG-dependent PGAM subfamily. Homodimer.

It catalyses the reaction (2R)-2-phosphoglycerate = (2R)-3-phosphoglycerate. It participates in carbohydrate degradation; glycolysis; pyruvate from D-glyceraldehyde 3-phosphate: step 3/5. Its function is as follows. Catalyzes the interconversion of 2-phosphoglycerate and 3-phosphoglycerate. The sequence is that of 2,3-bisphosphoglycerate-dependent phosphoglycerate mutase from Salmonella dublin (strain CT_02021853).